The following is a 194-amino-acid chain: Ion-translocating oxidoreductase complex subunit A (194 aa).

The next 6 membrane-spanning stretches (helical) occupy residues 1 to 21 (MVMH…FILV), 48 to 68 (CVIV…LIPF), 73 to 93 (LCTM…EIIV), 103 to 123 (LLGI…IPLM), 135 to 155 (VLYG…FSSI), and 172 to 192 (PIAL…DGLI).

This sequence belongs to the NqrDE/RnfAE family. As to quaternary structure, the complex is composed of six subunits: RnfA, RnfB, RnfC, RnfD, RnfE and RnfG.

It localises to the cell inner membrane. Part of a membrane-bound complex that couples electron transfer with translocation of ions across the membrane. The sequence is that of Ion-translocating oxidoreductase complex subunit A from Buchnera aphidicola subsp. Baizongia pistaciae (strain Bp).